We begin with the raw amino-acid sequence, 441 residues long: UDP-N-acetylglucosamine 1-carboxyvinyltransferase 1 (441 aa).

42–43 lines the phosphoenolpyruvate pocket; the sequence is KN. UDP-N-acetyl-alpha-D-glucosamine is bound at residue R117. The active-site Proton donor is the C141. C141 carries the post-translational modification 2-(S-cysteinyl)pyruvic acid O-phosphothioketal. The UDP-N-acetyl-alpha-D-glucosamine site is built by D330 and I352.

This sequence belongs to the EPSP synthase family. MurA subfamily.

The protein resides in the cytoplasm. The catalysed reaction is phosphoenolpyruvate + UDP-N-acetyl-alpha-D-glucosamine = UDP-N-acetyl-3-O-(1-carboxyvinyl)-alpha-D-glucosamine + phosphate. The protein operates within cell wall biogenesis; peptidoglycan biosynthesis. Cell wall formation. Adds enolpyruvyl to UDP-N-acetylglucosamine. In Symbiobacterium thermophilum (strain DSM 24528 / JCM 14929 / IAM 14863 / T), this protein is UDP-N-acetylglucosamine 1-carboxyvinyltransferase 1.